Here is a 293-residue protein sequence, read N- to C-terminus: Elongation factor Ts (293 aa).

Residues 79 to 82 form an involved in Mg(2+) ion dislocation from EF-Tu region; the sequence is TDFV.

It belongs to the EF-Ts family.

It localises to the cytoplasm. Functionally, associates with the EF-Tu.GDP complex and induces the exchange of GDP to GTP. It remains bound to the aminoacyl-tRNA.EF-Tu.GTP complex up to the GTP hydrolysis stage on the ribosome. The polypeptide is Elongation factor Ts (Bacillus velezensis (strain DSM 23117 / BGSC 10A6 / LMG 26770 / FZB42) (Bacillus amyloliquefaciens subsp. plantarum)).